A 192-amino-acid chain; its full sequence is Ribosomal RNA large subunit methyltransferase E (192 aa).

Glycine 48, phenylalanine 50, aspartate 67, aspartate 85, and aspartate 107 together coordinate S-adenosyl-L-methionine. The active-site Proton acceptor is the lysine 147.

It belongs to the class I-like SAM-binding methyltransferase superfamily. RNA methyltransferase RlmE family.

The protein localises to the cytoplasm. The enzyme catalyses uridine(2552) in 23S rRNA + S-adenosyl-L-methionine = 2'-O-methyluridine(2552) in 23S rRNA + S-adenosyl-L-homocysteine + H(+). Its function is as follows. Specifically methylates the uridine in position 2552 of 23S rRNA at the 2'-O position of the ribose in the fully assembled 50S ribosomal subunit. The sequence is that of Ribosomal RNA large subunit methyltransferase E from Borrelia garinii subsp. bavariensis (strain ATCC BAA-2496 / DSM 23469 / PBi) (Borreliella bavariensis).